A 489-amino-acid chain; its full sequence is Glycogen synthase (489 aa).

Position 18 (Lys18) interacts with ADP-alpha-D-glucose.

Belongs to the glycosyltransferase 1 family. Bacterial/plant glycogen synthase subfamily.

It catalyses the reaction [(1-&gt;4)-alpha-D-glucosyl](n) + ADP-alpha-D-glucose = [(1-&gt;4)-alpha-D-glucosyl](n+1) + ADP + H(+). The protein operates within glycan biosynthesis; glycogen biosynthesis. In terms of biological role, synthesizes alpha-1,4-glucan chains using ADP-glucose. In Rhodopseudomonas palustris (strain BisB18), this protein is Glycogen synthase.